Here is a 120-residue protein sequence, read N- to C-terminus: Large ribosomal subunit protein uL18 (120 aa).

It belongs to the universal ribosomal protein uL18 family. In terms of assembly, part of the 50S ribosomal subunit; part of the 5S rRNA/L5/L18/L25 subcomplex. Contacts the 5S and 23S rRNAs.

Functionally, this is one of the proteins that bind and probably mediate the attachment of the 5S RNA into the large ribosomal subunit, where it forms part of the central protuberance. This chain is Large ribosomal subunit protein uL18, found in Treponema denticola (strain ATCC 35405 / DSM 14222 / CIP 103919 / JCM 8153 / KCTC 15104).